Reading from the N-terminus, the 109-residue chain is Spermidine export protein MdtI (109 aa).

4 consecutive transmembrane segments (helical) span residues 6 to 26, 36 to 56, 64 to 84, and 88 to 108; these read WVHGAWLALAIILEIAANVLL, CYGILSLAAVLAAFSALSQAV, AYALWGGFGIAATLAAGWVLF, and LNPKGWVGVVLLLVGMIMIKL.

Belongs to the drug/metabolite transporter (DMT) superfamily. Small multidrug resistance (SMR) (TC 2.A.7.1) family. MdtI subfamily. Forms a complex with MdtJ.

The protein localises to the cell inner membrane. In terms of biological role, catalyzes the excretion of spermidine. The sequence is that of Spermidine export protein MdtI from Salmonella arizonae (strain ATCC BAA-731 / CDC346-86 / RSK2980).